We begin with the raw amino-acid sequence, 207 residues long: LPS-assembly lipoprotein LptE (207 aa).

The signal sequence occupies residues 1–19 (MRHRILMLLLGLAVLVTAG). Residue Cys-20 is the site of N-palmitoyl cysteine attachment. Cys-20 carries the S-diacylglycerol cysteine lipid modification.

Belongs to the LptE lipoprotein family. As to quaternary structure, component of the lipopolysaccharide transport and assembly complex. Interacts with LptD.

The protein resides in the cell outer membrane. Together with LptD, is involved in the assembly of lipopolysaccharide (LPS) at the surface of the outer membrane. Required for the proper assembly of LptD. Binds LPS and may serve as the LPS recognition site at the outer membrane. This is LPS-assembly lipoprotein LptE from Yersinia enterocolitica serotype O:8 / biotype 1B (strain NCTC 13174 / 8081).